Consider the following 87-residue polypeptide: Lantipeptide prochlorosin 3.3 (87 aa).

Residues 1-64 (MSEEQLKAFI…DEELEAASGG (64 aa)) constitute a propeptide that is removed on maturation. Thr-67 bears the 2,3-didehydrobutyrine mark. Residues 75-85 (TAGCYGGTKMC) constitute a cross-link (beta-methyllanthionine (Thr-Cys)). A cross-link (beta-methyllanthionine (Cys-Thr)) is located at residues 78–82 (CYGGT).

In terms of processing, cross-links are proved in vitro, when coepressed in E.coli with the ProcM lanthionine synthetase. Post-translationally, the beta-methyllanthionine residues have a DL configuration (with 2S,3S,6R stereochemistry). Maturation of prochlorosin involves the enzymatic conversion of Thr, and Ser into dehydrated AA and the formation of thioether bonds with cysteines. This is followed by membrane translocation and cleavage of the modified precursor.

The protein resides in the secreted. Its function is as follows. Lanthionine-containing peptide (lantipeptide) with unknown function. Does not show antibiotic activity against Lactococcus lactis 117 and Bacillus subtilis 6633 bacteria. Organisms that produce this peptide live in oligotrophic environments at very dilute concentrations, suggesting this peptide is not secreted to influence other bacteria. The protein is Lantipeptide prochlorosin 3.3 of Prochlorococcus marinus (strain MIT 9313).